Here is a 284-residue protein sequence, read N- to C-terminus: tRNA dimethylallyltransferase (284 aa).

6 to 13 (GPTASGKS) serves as a coordination point for ATP. 8-13 (TASGKS) is a binding site for substrate. The interval 31–34 (DSLS) is interaction with substrate tRNA.

This sequence belongs to the IPP transferase family. In terms of assembly, monomer. Requires Mg(2+) as cofactor.

The catalysed reaction is adenosine(37) in tRNA + dimethylallyl diphosphate = N(6)-dimethylallyladenosine(37) in tRNA + diphosphate. In terms of biological role, catalyzes the transfer of a dimethylallyl group onto the adenine at position 37 in tRNAs that read codons beginning with uridine, leading to the formation of N6-(dimethylallyl)adenosine (i(6)A). The protein is tRNA dimethylallyltransferase of Nautilia profundicola (strain ATCC BAA-1463 / DSM 18972 / AmH).